Here is a 392-residue protein sequence, read N- to C-terminus: Stilbene synthase 2 (392 aa).

Substrate is bound at residue 55-58 (KFNR). Cys-164 is a catalytic residue. Substrate is bound by residues Leu-267 and 305–307 (GGP).

It belongs to the thiolase-like superfamily. Chalcone/stilbene synthases family. In terms of assembly, homodimer.

It is found in the cytoplasm. It carries out the reaction 4-coumaroyl-CoA + 3 malonyl-CoA + 3 H(+) = trans-resveratrol + 4 CO2 + 4 CoA. The protein operates within phytoalexin biosynthesis; 3,4',5-trihydroxystilbene biosynthesis; 3,4',5-trihydroxystilbene from trans-4-coumarate: step 2/2. Mediates resistance to pathogens which are sensitive to stilbenes. The chain is Stilbene synthase 2 from Vitis vinifera (Grape).